The sequence spans 457 residues: Paired box protein Pax-8 (457 aa).

Positions G9–K135 form a DNA-binding region, paired. The tract at residues G12–T68 is PAI subdomain. Residues K87 to K135 are RED subdomain. Residues L159–I182 show a composition bias toward polar residues. The interval L159 to L224 is disordered. A Phosphoserine modification is found at S304.

As to quaternary structure, interacts with WWTR1. In terms of tissue distribution, expressed in the developing excretory system and the thyroid gland.

The protein localises to the nucleus. Thought to encode a transcription factor. It may have a role in kidney cell differentiation. May play a regulatory role in mammalian development. This is Paired box protein Pax-8 (Pax8) from Mus musculus (Mouse).